Here is a 110-residue protein sequence, read N- to C-terminus: Small ribosomal subunit protein mS33 (110 aa).

The segment covering 84–95 (KRRGKGAPKKMK) has biased composition (basic residues). Residues 84–110 (KRRGKGAPKKMKKDAAATAKGKGKKKK) form a disordered region.

This sequence belongs to the mitochondrion-specific ribosomal protein mS33 family. As to quaternary structure, component of the mitochondrial small ribosomal subunit (mt-SSU). Mature yeast 74S mitochondrial ribosomes consist of a small (37S) and a large (54S) subunit. The 37S small subunit contains a 15S ribosomal RNA (15S mt-rRNA) and 34 different proteins. The 54S large subunit contains a 21S rRNA (21S mt-rRNA) and 46 different proteins.

It localises to the mitochondrion. Functionally, component of the mitochondrial ribosome (mitoribosome), a dedicated translation machinery responsible for the synthesis of mitochondrial genome-encoded proteins, including at least some of the essential transmembrane subunits of the mitochondrial respiratory chain. The mitoribosomes are attached to the mitochondrial inner membrane and translation products are cotranslationally integrated into the membrane. In Saccharomyces cerevisiae (strain ATCC 204508 / S288c) (Baker's yeast), this protein is Small ribosomal subunit protein mS33 (RSM27).